The primary structure comprises 215 residues: MANRGATRPNGPNTGNKICQFKLVLLGESAVGKSSLVLRFVKGQFHEFQESTIGAAFLTQTVCLDDTTVKFEIWDTAGQERYHSLAPMYYRGAQAAIVVYDITNEESFSRAKNWVKELQRQASPNIVIALSGNKADLANKRAVDFQEAQSYADDNSLLFMETSAKTPMNVNEIFMAIAKKLPKNEPQNPGANSARGRGVDLTEPAQPARSQCCSN.

GTP-binding residues include Ser-29, Ala-30, Gly-32, Lys-33, Ser-34, Ser-35, His-46, Glu-47, Thr-52, and Gly-78. Mg(2+) is bound at residue Ser-34. 2 consecutive short sequence motifs (switch) follow at residues 44 to 56 and 77 to 93; these read QFHE…IGAA and AGQE…YRGA. Thr-52 serves as a coordination point for Mg(2+). Ser-84 bears the Phosphoserine mark. Residues Asn-133, Lys-134, Asp-136, Ala-164, and Lys-165 each contribute to the GTP site. The segment at 181 to 215 is disordered; the sequence is LPKNEPQNPGANSARGRGVDLTEPAQPARSQCCSN. 2 S-geranylgeranyl cysteine lipidation sites follow: Cys-212 and Cys-213.

The protein belongs to the small GTPase superfamily. Rab family. Interacts with GDI1; this promotes dissociation from membranes; phosphorylation at Ser-84 disrupts this interaction. Interacts with GDI2; phosphorylation at Ser-84 disrupts the interaction. Interacts with EEA1. Interacts with RIN1 and GAPVD1, which regulate its pathway, probably by acting as a GEF. Interacts with ALS2CL, SUN2, ZFYVE20 and RUFY1. Interacts with RABEP1; one RABEP1 homodimer binds two RAB5A chains, but at opposite sides of the dimer. Interacts with SGSM1, SGSM3 and PIK3CB. Interacts with RINL. May be a component of a complex composed of RAB5A, DYN2 and PIK3C3. Does not interact with the BLOC-3 complex (heterodimer of HPS1 and HPS4). Interacts with CLN5. Interacts with APPL2. Interacts with F8A1/F8A2/F8A3. Found in a complex with F8A1/F8A2/F8A3, HTT and RAB5A; mediates the recruitment of HTT by RAB5A onto early endosomes. Interacts with ATP9A. Interacts with PPP1R21; mediates the recruitment of FERRY complex by RAB5A onto early endosomes. Mg(2+) serves as cofactor. Phosphorylation of Ser-84 in the switch II region by LRRK2 prevents the association of RAB regulatory proteins, including RAB GDP dissociation inhibitors GDI1 and GDI2.

It is found in the cell membrane. Its subcellular location is the early endosome membrane. The protein localises to the melanosome. The protein resides in the cytoplasmic vesicle. It localises to the cell projection. It is found in the ruffle. Its subcellular location is the membrane. The protein localises to the cytoplasm. The protein resides in the cytosol. It localises to the phagosome membrane. It is found in the endosome membrane. It carries out the reaction GTP + H2O = GDP + phosphate + H(+). Regulated by guanine nucleotide exchange factors (GEFs) including RINL, which promote the exchange of bound GDP for free GTP. Regulated by GTPase activating proteins (GAPs) which increase the GTP hydrolysis activity. Inhibited by GDP dissociation inhibitors (GDIs). The small GTPases Rab are key regulators of intracellular membrane trafficking, from the formation of transport vesicles to their fusion with membranes. Rabs cycle between an inactive GDP-bound form and an active GTP-bound form that is able to recruit to membranes different sets of downstream effectors directly responsible for vesicle formation, movement, tethering and fusion. RAB5A is required for the fusion of plasma membranes and early endosomes. Contributes to the regulation of filopodia extension. Required for the exosomal release of SDCBP, CD63, PDCD6IP and syndecan. Regulates maturation of apoptotic cell-containing phagosomes, probably downstream of DYN2 and PIK3C3. This chain is Ras-related protein Rab-5A, found in Rattus norvegicus (Rat).